We begin with the raw amino-acid sequence, 451 residues long: Alpha-galactosidase (451 aa).

5–71 is an NAD(+) binding site; sequence PKITFIGAGS…ASGRITCHTN (67 aa). Asn151 lines the substrate pocket. Residue Cys173 participates in Mn(2+) binding. His174 (proton donor) is an active-site residue. Residue His203 coordinates Mn(2+). Residue Arg287 participates in substrate binding.

It belongs to the glycosyl hydrolase 4 family. Homodimer. Mn(2+) is required as a cofactor. Requires NAD(+) as cofactor.

It catalyses the reaction Hydrolysis of terminal, non-reducing alpha-D-galactose residues in alpha-D-galactosides, including galactose oligosaccharides, galactomannans and galactolipids.. The protein is Alpha-galactosidase (melA) of Salmonella typhimurium (strain LT2 / SGSC1412 / ATCC 700720).